Here is a 352-residue protein sequence, read N- to C-terminus: Protein RecA (352 aa).

67–74 contacts ATP; that stretch reads GPESSGKT.

This sequence belongs to the RecA family.

It is found in the cytoplasm. Can catalyze the hydrolysis of ATP in the presence of single-stranded DNA, the ATP-dependent uptake of single-stranded DNA by duplex DNA, and the ATP-dependent hybridization of homologous single-stranded DNAs. It interacts with LexA causing its activation and leading to its autocatalytic cleavage. In Klebsiella pneumoniae subsp. pneumoniae (strain ATCC 700721 / MGH 78578), this protein is Protein RecA.